Here is a 432-residue protein sequence, read N- to C-terminus: 2-oxoglutarate-dependent dioxygenase AOP2 (432 aa).

In terms of domain architecture, Fe2OG dioxygenase spans 281 to 378 (SGDDVEANDD…RYTAAIFTCP (98 aa)). Fe cation contacts are provided by His301, Asp303, and His358. Position 369 (Arg369) interacts with 2-oxoglutarate.

It belongs to the iron/ascorbate-dependent oxidoreductase family. Fe(2+) is required as a cofactor.

In terms of biological role, 2-oxoglutarate-dependent dioxygenase involved in glucosinolates biosynthesis. Catalyzes the conversion of methylsulfinylalkyl glucosinolates to alkenyl glucosinolates. The polypeptide is 2-oxoglutarate-dependent dioxygenase AOP2 (AOP2) (Arabidopsis thaliana (Mouse-ear cress)).